A 93-amino-acid chain; its full sequence is YcgL domain-containing protein VFMJ11_1829 (93 aa).

The YcgL domain maps to 1-84 (MFCSIYKSTK…PPENLLEKYK (84 aa)).

The chain is YcgL domain-containing protein VFMJ11_1829 from Aliivibrio fischeri (strain MJ11) (Vibrio fischeri).